The sequence spans 252 residues: Acyltransferase PGAP2 (252 aa).

Over 1-22 (MVPVGPERGANSLFSLRFTTFA) the chain is Cytoplasmic. The chain crosses the membrane as a helical span at residues 23–43 (VGTVSLPLFAFLFCIVWSLLF). Over 44 to 77 (NFSETTATHCHVPNYLPSVSAAIGGETPQRYIWR) the chain is Lumenal. A helical transmembrane segment spans residues 78–98 (LCIGLHSAPRFLVGVAYLHYY). Residues 99–111 (QGTPCSSPAYPRL) lie on the Cytoplasmic side of the membrane. A helical transmembrane segment spans residues 112-132 (CHLNFLLNCCEIFFLILLTYV). Residues 133-142 (SSSENYEVHK) lie on the Lumenal side of the membrane. The helical transmembrane segment at 143 to 163 (LGFMAFMLFSVGYMFVTCSLW) threads the bilayer. The Cytoplasmic segment spans residues 164–184 (RVARKGSGSLEERTSYAWKKR). A helical transmembrane segment spans residues 185–205 (LFGFYLLMFLSSILVYIWHNM). Residues 206–208 (YCE) lie on the Lumenal side of the membrane. The chain crosses the membrane as a helical span at residues 209–229 (AGVYTVFALLEYLVVLSNMGF). The Cytoplasmic segment spans residues 230–252 (HMTAWWDFGNKELMICSPGDKRI).

Belongs to the PGAP2 family.

The protein resides in the golgi apparatus membrane. Functionally, involved in the fatty acid remodeling steps of GPI-anchor maturation where the unsaturated acyl chain at sn-2 of inositol phosphate is replaced by a saturated stearoyl chain. May catalyze the second step of the fatty acid remodeling, by reacylating a lyso-GPI intermediate at sn-2 of inositol phosphate by a saturated chain. The fatty acid remodeling steps is critical for the integration of GPI-APs into lipid rafts. The protein is Acyltransferase PGAP2 of Xenopus tropicalis (Western clawed frog).